The primary structure comprises 49 residues: Heme exporter protein C (49 aa).

It belongs to the CcmC/CycZ/HelC family.

The protein localises to the cell inner membrane. Required for the export of heme to the periplasm for the biogenesis of c-type cytochromes. This Rhizobium leguminosarum bv. viciae protein is Heme exporter protein C.